We begin with the raw amino-acid sequence, 287 residues long: PsbP domain-containing protein 1, chloroplastic (287 aa).

The protein belongs to the PsbP family. In terms of assembly, partially associated with photosystem I (PSI) complex, but is not a subunit of the complex. Interacts with PsaA and PsaB, but not with PasF.

Its subcellular location is the plastid. It localises to the chloroplast thylakoid lumen. Photosystem I assembly factor that assists the proper folding and integration of PsaB and PsaA into the thylakoid membrane. In Arabidopsis thaliana (Mouse-ear cress), this protein is PsbP domain-containing protein 1, chloroplastic (PPD1).